We begin with the raw amino-acid sequence, 291 residues long: Ribose-phosphate pyrophosphokinase (291 aa).

ATP-binding positions include 34 to 36 and 93 to 94; these read DGE and RQ. Residues His127 and Asp165 each contribute to the Mg(2+) site. Lys188 is an active-site residue. Residues Arg190, Asp216, and 220 to 224 each bind D-ribose 5-phosphate; that span reads STGGT.

It belongs to the ribose-phosphate pyrophosphokinase family. Class III (archaeal) subfamily. Homodimer. Mg(2+) is required as a cofactor.

The protein localises to the cytoplasm. The catalysed reaction is D-ribose 5-phosphate + ATP = 5-phospho-alpha-D-ribose 1-diphosphate + AMP + H(+). It functions in the pathway metabolic intermediate biosynthesis; 5-phospho-alpha-D-ribose 1-diphosphate biosynthesis; 5-phospho-alpha-D-ribose 1-diphosphate from D-ribose 5-phosphate (route I): step 1/1. Its function is as follows. Involved in the biosynthesis of the central metabolite phospho-alpha-D-ribosyl-1-pyrophosphate (PRPP) via the transfer of pyrophosphoryl group from ATP to 1-hydroxyl of ribose-5-phosphate (Rib-5-P). In Saccharolobus solfataricus (strain ATCC 35092 / DSM 1617 / JCM 11322 / P2) (Sulfolobus solfataricus), this protein is Ribose-phosphate pyrophosphokinase.